The following is a 548-amino-acid chain: Frizzled-7 (548 aa).

The first 19 residues, methionine 1–alanine 19, serve as a signal peptide directing secretion. Topologically, residues glutamine 20–tryptophan 230 are extracellular. An FZ domain is found at proline 31–glutamine 150. Cystine bridges form between cysteine 36/cysteine 97, cysteine 44/cysteine 90, cysteine 81/cysteine 118, cysteine 107/cysteine 147, and cysteine 111/cysteine 135. Asparagine 50 carries an N-linked (GlcNAc...) asparagine glycan. An N-linked (GlcNAc...) asparagine glycan is attached at asparagine 151. Residues valine 231–valine 251 traverse the membrane as a helical segment. Residues aspartate 252–proline 262 are Cytoplasmic-facing. The helical transmembrane segment at isoleucine 263–leucine 283 threads the bilayer. At glutamate 284–cysteine 310 the chain is on the extracellular side. Residues threonine 311–leucine 331 traverse the membrane as a helical segment. At serine 332–glutamine 353 the chain is on the cytoplasmic side. The chain crosses the membrane as a helical span at residues tyrosine 354–glycine 374. Over glutamine 375–glycine 397 the chain is Extracellular. Residues phenylalanine 398–phenylalanine 418 traverse the membrane as a helical segment. The Cytoplasmic segment spans residues valine 419 to arginine 444. Residues isoleucine 445–tyrosine 465 traverse the membrane as a helical segment. Residues glutamate 466 to threonine 502 are Extracellular-facing. A helical membrane pass occupies residues valine 503 to tryptophan 523. Residues serine 524–valine 548 are Cytoplasmic-facing. The Lys-Thr-X-X-X-Trp motif, mediates interaction with the PDZ domain of Dvl family members motif lies at lysine 526–tryptophan 531. Positions threonine 546–valine 548 match the PDZ-binding motif.

The protein belongs to the G-protein coupled receptor Fz/Smo family. In terms of assembly, interacts with wnt11 and sdc4. The extracellular domain interacts with the extracellular domain of pcdh8/papc.

It localises to the cell membrane. Its subcellular location is the endosome membrane. Functionally, receptor for Wnt proteins. Acts in both canonical and non-canonical Wnt pathways. Although different papers report differing Wnt preferences, wnt5a, wnt8b and wnt11 have been proposed as synergists. In the canonical Wnt pathway, acts via beta-catenin to promote the expression of the dorsal genes siamois, twin and nodal3 and to establish the dorsal axis of the embryo and induce dorsal mesoderm formation. In a non-canonical Wnt/planar cell polarity (PCP) pathway, acts with sdc4 and dvl2/dsh to regulate convergent extension movements in gastrulation. Triggers phosphorylation of dvl2/dsh and its translocation to the plasma membrane. In a third branch of Wnt signaling, acts in a non-canonical pathway via trimeric G proteins, and independently of dvl2/dsh, to recruit protein kinase C (PKC) to the membrane and thus activate PKC. PKC signaling controls cell sorting and tissue separation during gastrulation. In Xenopus tropicalis (Western clawed frog), this protein is Frizzled-7.